The chain runs to 208 residues: Small ribosomal subunit protein uS4A (208 aa).

An S4 RNA-binding domain is found at 98–159 (SRLDNVAYNM…HAKSYLRIKA (62 aa)).

Belongs to the universal ribosomal protein uS4 family. As to quaternary structure, part of the 30S ribosomal subunit. Contacts protein S5. The interaction surface between S4 and S5 is involved in control of translational fidelity.

Its function is as follows. One of the primary rRNA binding proteins, it binds directly to 16S rRNA where it nucleates assembly of the body of the 30S subunit. Functionally, with S5 and S12 plays an important role in translational accuracy. The protein is Small ribosomal subunit protein uS4A (rpsD1) of Nitrosomonas europaea (strain ATCC 19718 / CIP 103999 / KCTC 2705 / NBRC 14298).